A 484-amino-acid chain; its full sequence is Cysteine--tRNA ligase (484 aa).

Zn(2+) is bound at residue Cys-29. A 'HIGH' region motif is present at residues 31–41; it reads ATVQGMPHVGH. Positions 227, 252, and 256 each coordinate Zn(2+). The 'KMSKS' region signature appears at 283–287; that stretch reads KMSKS. Position 286 (Lys-286) interacts with ATP.

This sequence belongs to the class-I aminoacyl-tRNA synthetase family. In terms of assembly, monomer. Requires Zn(2+) as cofactor.

It localises to the cytoplasm. The catalysed reaction is tRNA(Cys) + L-cysteine + ATP = L-cysteinyl-tRNA(Cys) + AMP + diphosphate. The sequence is that of Cysteine--tRNA ligase from Paenarthrobacter aurescens (strain TC1).